Consider the following 227-residue polypeptide: ATP synthase F(0) complex subunit a (227 aa).

6 helical membrane passes run 14–34, 69–89, 98–118, 139–159, 165–185, and 189–209; these read FLGI…FPSP, WAMI…LGLL, QLSM…LIGM, IPIL…ALGV, LTAG…MLSI, and IATL…AVAM.

It belongs to the ATPase A chain family. Component of the ATP synthase complex composed at least of ATP5F1A/subunit alpha, ATP5F1B/subunit beta, ATP5MC1/subunit c (homooctomer), MT-ATP6/subunit a, MT-ATP8/subunit 8, ATP5ME/subunit e, ATP5MF/subunit f, ATP5MG/subunit g, ATP5MK/subunit k, ATP5MJ/subunit j, ATP5F1C/subunit gamma, ATP5F1D/subunit delta, ATP5F1E/subunit epsilon, ATP5PF/subunit F6, ATP5PB/subunit b, ATP5PD/subunit d, ATP5PO/subunit OSCP. ATP synthase complex consists of a soluble F(1) head domain (subunits alpha(3) and beta(3)) - the catalytic core - and a membrane F(0) domain - the membrane proton channel (subunits c, a, 8, e, f, g, k and j). These two domains are linked by a central stalk (subunits gamma, delta, and epsilon) rotating inside the F1 region and a stationary peripheral stalk (subunits F6, b, d, and OSCP). Interacts with DNAJC30; interaction is direct.

It localises to the mitochondrion inner membrane. It carries out the reaction H(+)(in) = H(+)(out). Its function is as follows. Subunit a, of the mitochondrial membrane ATP synthase complex (F(1)F(0) ATP synthase or Complex V) that produces ATP from ADP in the presence of a proton gradient across the membrane which is generated by electron transport complexes of the respiratory chain. ATP synthase complex consist of a soluble F(1) head domain - the catalytic core - and a membrane F(1) domain - the membrane proton channel. These two domains are linked by a central stalk rotating inside the F(1) region and a stationary peripheral stalk. During catalysis, ATP synthesis in the catalytic domain of F(1) is coupled via a rotary mechanism of the central stalk subunits to proton translocation. With the subunit c (ATP5MC1), forms the proton-conducting channel in the F(0) domain, that contains two crucial half-channels (inlet and outlet) that facilitate proton movement from the mitochondrial intermembrane space (IMS) into the matrix. Protons are taken up via the inlet half-channel and released through the outlet half-channel, following a Grotthuss mechanism. The chain is ATP synthase F(0) complex subunit a from Polypterus ornatipinnis (Ornate bichir).